A 311-amino-acid polypeptide reads, in one-letter code: Pyrimidine-specific ribonucleoside hydrolase RihA (311 aa).

His-240 is an active-site residue.

This sequence belongs to the IUNH family. RihA subfamily.

Functionally, hydrolyzes cytidine or uridine to ribose and cytosine or uracil, respectively. The chain is Pyrimidine-specific ribonucleoside hydrolase RihA from Salmonella agona (strain SL483).